A 143-amino-acid chain; its full sequence is UPF0251 protein CA_C3166 (143 aa).

The protein belongs to the UPF0251 family.

This chain is UPF0251 protein CA_C3166, found in Clostridium acetobutylicum (strain ATCC 824 / DSM 792 / JCM 1419 / IAM 19013 / LMG 5710 / NBRC 13948 / NRRL B-527 / VKM B-1787 / 2291 / W).